Reading from the N-terminus, the 171-residue chain is SWR1 complex subunit 6 (171 aa).

The disordered stretch occupies residues 63 to 87; the sequence is DEDDDLGYLQKKQHKGSKRKTRQAK. Residues 73 to 85 are compositionally biased toward basic residues; sequence KKQHKGSKRKTRQ. Residues Cys134, Cys137, Cys145, Cys148, Cys153, Cys157, His161, and Cys166 each coordinate Zn(2+). The segment at 134 to 166 adopts an HIT-type zinc-finger fold; sequence CSVCGYIAGYNCCLCGMRFCSIRCQNIHKDTRC.

The protein belongs to the ZNHIT1 family. In terms of assembly, homodimer. Component of the SWR1 chromatin-remodeling complex composed of at least ARP6/ESD1/SUF3, PIE1, SWC6, SWC2 and H2AZs (HTA8, HTA9, HTA11). Interacts directly with ARP6, PIE1 and SWC2. Interacts with FLX and SUF4, two component of the transcription activator complex FRI-C, and with ASHH2 and TAF14. In terms of tissue distribution, expressed in root, lateral root primordia, shoot apex, leaves, stems, inflorescences, flowers, axillary buds, developing siliques and premature seeds.

Its subcellular location is the nucleus speckle. The protein resides in the nucleus. In terms of biological role, component of the SWR1 complex which mediates the ATP-dependent exchange of histone H2A for the H2A variant H2A.F/Z leading to transcriptional regulation of selected genes (e.g. FLC) by chromatin remodeling. Coodinates SWR1-C, FRI-C (FLC transcription activator complex), histone methyltransferase and general transcription factors. Represses flowering by positively regulating FLC and MAF4. Binds to the promoter region of FLC chromatin. This Arabidopsis thaliana (Mouse-ear cress) protein is SWR1 complex subunit 6 (SWC6).